The primary structure comprises 295 residues: Bifunctional protein FolD (295 aa).

Residues Gly165–Gly167, Ser192, and Ile233 each bind NADP(+).

Belongs to the tetrahydrofolate dehydrogenase/cyclohydrolase family. In terms of assembly, homodimer.

It carries out the reaction (6R)-5,10-methylene-5,6,7,8-tetrahydrofolate + NADP(+) = (6R)-5,10-methenyltetrahydrofolate + NADPH. The catalysed reaction is (6R)-5,10-methenyltetrahydrofolate + H2O = (6R)-10-formyltetrahydrofolate + H(+). Its pathway is one-carbon metabolism; tetrahydrofolate interconversion. Its function is as follows. Catalyzes the oxidation of 5,10-methylenetetrahydrofolate to 5,10-methenyltetrahydrofolate and then the hydrolysis of 5,10-methenyltetrahydrofolate to 10-formyltetrahydrofolate. This is Bifunctional protein FolD from Tropheryma whipplei (strain Twist) (Whipple's bacillus).